The chain runs to 579 residues: Mitochondrial distribution and morphology protein 36 (579 aa).

The tract at residues methionine 1–lysine 27 is disordered. Phosphoserine is present on serine 42. 2 disordered regions span residues threonine 378–leucine 401 and aspartate 446–serine 518. Positions proline 379 to asparagine 390 are enriched in polar residues. Residues aspartate 446 to histidine 463 show a composition bias toward basic and acidic residues. The segment covering proline 495–serine 518 has biased composition (low complexity).

Functionally, involved in mitochondrial distribution and morphology. The polypeptide is Mitochondrial distribution and morphology protein 36 (MDM36) (Saccharomyces cerevisiae (strain ATCC 204508 / S288c) (Baker's yeast)).